The chain runs to 517 residues: Intermediate filament family orphan 2 (517 aa).

Residues 53–484 (NIHLLKGLNV…RLIKGSADRN (432 aa)) form the IF rod domain. 3 disordered regions span residues 104–129 (EQAV…SSGA), 330–349 (KVAS…RFSD), and 478–517 (KGSA…PMVS). Low complexity predominate over residues 485–497 (SPSPSSVASSDSG). Residues 501–517 (EIQDEFEREADVEPMVS) show a composition bias toward acidic residues.

It belongs to the intermediate filament family.

This is Intermediate filament family orphan 2 (IFFO2) from Homo sapiens (Human).